A 130-amino-acid chain; its full sequence is ATP synthase epsilon chain (130 aa).

The protein belongs to the ATPase epsilon chain family. In terms of assembly, F-type ATPases have 2 components, CF(1) - the catalytic core - and CF(0) - the membrane proton channel. CF(1) has five subunits: alpha(3), beta(3), gamma(1), delta(1), epsilon(1). CF(0) has three main subunits: a, b and c.

It is found in the cell inner membrane. Its function is as follows. Produces ATP from ADP in the presence of a proton gradient across the membrane. This is ATP synthase epsilon chain from Campylobacter lari (strain RM2100 / D67 / ATCC BAA-1060).